The following is a 993-amino-acid chain: Importin subunit beta-5 (993 aa).

In terms of domain architecture, Importin N-terminal spans 24–100 (AELGLRDLEK…RETLLHLLVS (77 aa)).

The protein resides in the nucleus. Functionally, required for nuclear protein import and mediates docking of import substrate to distinct nucleoporins. Serves a receptor for nuclear localization signals. Mediates the nuclear import of TATA-binding protein (TBP) and of histones H2A and H2B. This Schizosaccharomyces pombe (strain 972 / ATCC 24843) (Fission yeast) protein is Importin subunit beta-5 (kap114).